The following is a 64-amino-acid chain: MSSPTIPSRLYSLLFRRTSTFALTIAVGALFFERAFDQGADAIYEHINEGKLWKHIKHKYENKE.

At 2-18 (SSPTIPSRLYSLLFRRT) the chain is on the mitochondrial matrix side. The helical transmembrane segment at 19–43 (STFALTIAVGALFFERAFDQGADAI) threads the bilayer. Over 44–63 (YEHINEGKLWKHIKHKYENK) the chain is Mitochondrial intermembrane.

It belongs to the UQCR10/QCR9 family. As to quaternary structure, component of the ubiquinol-cytochrome c oxidoreductase (cytochrome b-c1 complex, complex III, CIII), a multisubunit enzyme composed of 11 subunits. The complex is composed of 3 respiratory subunits cytochrome b, cytochrome c1 and Rieske protein UQCRFS1, 2 core protein subunits UQCRC1/QCR1 and UQCRC2/QCR2, and 6 low-molecular weight protein subunits UQCRH/QCR6, UQCRB/QCR7, UQCRQ/QCR8, UQCR10/QCR9, UQCR11/QCR10 and subunit 9, the cleavage product of Rieske protein UQCRFS1. The complex exists as an obligatory dimer and forms supercomplexes (SCs) in the inner mitochondrial membrane with NADH-ubiquinone oxidoreductase (complex I, CI) and cytochrome c oxidase (complex IV, CIV), resulting in different assemblies (supercomplex SCI(1)III(2)IV(1) and megacomplex MCI(2)III(2)IV(2)). Interacts with STMP1.

It is found in the mitochondrion inner membrane. Its function is as follows. Component of the ubiquinol-cytochrome c oxidoreductase, a multisubunit transmembrane complex that is part of the mitochondrial electron transport chain which drives oxidative phosphorylation. The respiratory chain contains 3 multisubunit complexes succinate dehydrogenase (complex II, CII), ubiquinol-cytochrome c oxidoreductase (cytochrome b-c1 complex, complex III, CIII) and cytochrome c oxidase (complex IV, CIV), that cooperate to transfer electrons derived from NADH and succinate to molecular oxygen, creating an electrochemical gradient over the inner membrane that drives transmembrane transport and the ATP synthase. The cytochrome b-c1 complex catalyzes electron transfer from ubiquinol to cytochrome c, linking this redox reaction to translocation of protons across the mitochondrial inner membrane, with protons being carried across the membrane as hydrogens on the quinol. In the process called Q cycle, 2 protons are consumed from the matrix, 4 protons are released into the intermembrane space and 2 electrons are passed to cytochrome c. The chain is Cytochrome b-c1 complex subunit 9 (Uqcr10) from Mus musculus (Mouse).